A 590-amino-acid polypeptide reads, in one-letter code: Phosphate-repressible phosphate permease pho-4 (590 aa).

Transmembrane regions (helical) follow at residues 6 to 26 (FDYL…NIGA), 44 to 64 (YLQA…GVGA), 85 to 105 (ALLM…LTMA), 118 to 138 (IMGG…VQWV), 149 to 169 (VFLA…IIFL), 186 to 206 (FVMV…LLLW), 220 to 240 (IAGT…IFLM), and 246 to 266 (IVIL…PLLL). Residues 267–466 (RRGEVPPPPA…GALPEKGKAD (200 aa)) lie on the Cytoplasmic side of the membrane. The disordered stretch occupies residues 297 to 361 (ARRAAQNGDS…PQIKTMVGPR (65 aa)). The segment covering 313 to 322 (VTSSTSNPSA) has biased composition (polar residues). Residues 325 to 345 (DGEKGATITKDDSSYSHDHSE) are compositionally biased toward basic and acidic residues. Transmembrane regions (helical) follow at residues 467–487 (VPVW…WTYG), 506–525 (GFSM…RLKL), 527–547 (VSTT…SGTW), and 561–581 (GWFI…GIII).

Belongs to the inorganic phosphate transporter (PiT) (TC 2.A.20) family.

The protein resides in the cell membrane. Phosphate transport activity is competitively inhibited by vanadate and arsenate. High-affinity transporter for external inorganic phosphate. Acts probably as a sodium-phosphate symporter. Component of the high affinity phosphate transport system II (ptsII) necessary for scavenging phosphorus from the environment under conditions of limiting phosphorus. In Neurospora crassa (strain ATCC 24698 / 74-OR23-1A / CBS 708.71 / DSM 1257 / FGSC 987), this protein is Phosphate-repressible phosphate permease pho-4.